The following is an 87-amino-acid chain: Small ribosomal subunit protein bS20 (87 aa).

The segment covering 1–11 (MANIKSAKKRA) has biased composition (basic residues). Residues 1-27 (MANIKSAKKRAVQSEKRRQHNASQRSM) form a disordered region.

This sequence belongs to the bacterial ribosomal protein bS20 family.

Binds directly to 16S ribosomal RNA. The chain is Small ribosomal subunit protein bS20 from Histophilus somni (strain 129Pt) (Haemophilus somnus).